A 630-amino-acid chain; its full sequence is 1-deoxy-D-xylulose-5-phosphate synthase (630 aa).

Residues histidine 72 and glycine 113–serine 115 each bind thiamine diphosphate. Mg(2+) is bound at residue aspartate 144. Thiamine diphosphate contacts are provided by residues glycine 145–alanine 146, asparagine 173, tyrosine 284, and glutamate 367. Asparagine 173 serves as a coordination point for Mg(2+).

The protein belongs to the transketolase family. DXPS subfamily. In terms of assembly, homodimer. Requires Mg(2+) as cofactor. Thiamine diphosphate is required as a cofactor.

It carries out the reaction D-glyceraldehyde 3-phosphate + pyruvate + H(+) = 1-deoxy-D-xylulose 5-phosphate + CO2. It functions in the pathway metabolic intermediate biosynthesis; 1-deoxy-D-xylulose 5-phosphate biosynthesis; 1-deoxy-D-xylulose 5-phosphate from D-glyceraldehyde 3-phosphate and pyruvate: step 1/1. Catalyzes the acyloin condensation reaction between C atoms 2 and 3 of pyruvate and glyceraldehyde 3-phosphate to yield 1-deoxy-D-xylulose-5-phosphate (DXP). This chain is 1-deoxy-D-xylulose-5-phosphate synthase, found in Bacillus cereus (strain ATCC 10987 / NRS 248).